The following is a 339-amino-acid chain: Phenylalanine--tRNA ligase alpha subunit (339 aa).

Glu-253 contacts Mg(2+).

It belongs to the class-II aminoacyl-tRNA synthetase family. Phe-tRNA synthetase alpha subunit type 1 subfamily. In terms of assembly, tetramer of two alpha and two beta subunits. The cofactor is Mg(2+).

The protein resides in the cytoplasm. The enzyme catalyses tRNA(Phe) + L-phenylalanine + ATP = L-phenylalanyl-tRNA(Phe) + AMP + diphosphate + H(+). The polypeptide is Phenylalanine--tRNA ligase alpha subunit (Thioalkalivibrio sulfidiphilus (strain HL-EbGR7)).